A 623-amino-acid polypeptide reads, in one-letter code: Kelch repeat and BTB domain-containing protein 12 (623 aa).

Positions 25–92 (TDVVLVAEGV…MYSSNLPLTA (68 aa)) constitute a BTB domain. Residues 127–236 (CLGIYYYARD…GVDYLKGTMK (110 aa)) form the BACK domain. Kelch repeat units lie at residues 390–440 (NLYL…RMKG), 441–496 (RLYV…ALNG), 498–551 (IYVL…ASNA), and 557–607 (KLYV…LVAN).

The polypeptide is Kelch repeat and BTB domain-containing protein 12 (kbtbd12) (Danio rerio (Zebrafish)).